The following is a 427-amino-acid chain: 3-phosphoshikimate 1-carboxyvinyltransferase (427 aa).

3-phosphoshikimate-binding residues include Lys20, Ser21, and Arg25. Lys20 provides a ligand contact to phosphoenolpyruvate. Phosphoenolpyruvate contacts are provided by Gly92 and Arg120. Positions 166, 168, 312, and 339 each coordinate 3-phosphoshikimate. Residue Gln168 coordinates phosphoenolpyruvate. Catalysis depends on Asp312, which acts as the Proton acceptor. Phosphoenolpyruvate contacts are provided by Arg343 and Arg385.

Belongs to the EPSP synthase family. Monomer.

The protein localises to the cytoplasm. The catalysed reaction is 3-phosphoshikimate + phosphoenolpyruvate = 5-O-(1-carboxyvinyl)-3-phosphoshikimate + phosphate. Its pathway is metabolic intermediate biosynthesis; chorismate biosynthesis; chorismate from D-erythrose 4-phosphate and phosphoenolpyruvate: step 6/7. Its function is as follows. Catalyzes the transfer of the enolpyruvyl moiety of phosphoenolpyruvate (PEP) to the 5-hydroxyl of shikimate-3-phosphate (S3P) to produce enolpyruvyl shikimate-3-phosphate and inorganic phosphate. The sequence is that of 3-phosphoshikimate 1-carboxyvinyltransferase from Streptococcus gordonii (strain Challis / ATCC 35105 / BCRC 15272 / CH1 / DL1 / V288).